A 529-amino-acid chain; its full sequence is Bifunctional purine biosynthesis protein PurH (529 aa).

Residues 1-148 (MQQRRPVRRA…KNHRDVAIVV (148 aa)) form the MGS-like domain. Lys-287 carries the N6-acetyllysine modification.

Belongs to the PurH family.

It carries out the reaction (6R)-10-formyltetrahydrofolate + 5-amino-1-(5-phospho-beta-D-ribosyl)imidazole-4-carboxamide = 5-formamido-1-(5-phospho-D-ribosyl)imidazole-4-carboxamide + (6S)-5,6,7,8-tetrahydrofolate. It catalyses the reaction IMP + H2O = 5-formamido-1-(5-phospho-D-ribosyl)imidazole-4-carboxamide. Its pathway is purine metabolism; IMP biosynthesis via de novo pathway; 5-formamido-1-(5-phospho-D-ribosyl)imidazole-4-carboxamide from 5-amino-1-(5-phospho-D-ribosyl)imidazole-4-carboxamide (10-formyl THF route): step 1/1. It functions in the pathway purine metabolism; IMP biosynthesis via de novo pathway; IMP from 5-formamido-1-(5-phospho-D-ribosyl)imidazole-4-carboxamide: step 1/1. The chain is Bifunctional purine biosynthesis protein PurH from Escherichia coli O6:K15:H31 (strain 536 / UPEC).